The sequence spans 211 residues: Dephospho-CoA kinase (211 aa).

The region spanning 7 to 211 is the DPCK domain; the sequence is LIGVIGRSGA…ILTRRGVLGE (205 aa). ATP is bound at residue 15–20; sequence GAGKNV.

The protein belongs to the CoaE family.

It localises to the cytoplasm. It carries out the reaction 3'-dephospho-CoA + ATP = ADP + CoA + H(+). It functions in the pathway cofactor biosynthesis; coenzyme A biosynthesis; CoA from (R)-pantothenate: step 5/5. Its function is as follows. Catalyzes the phosphorylation of the 3'-hydroxyl group of dephosphocoenzyme A to form coenzyme A. The sequence is that of Dephospho-CoA kinase from Treponema pallidum (strain Nichols).